An 83-amino-acid chain; its full sequence is MKTLLLTLLVVTIVCLDLGYTLECHNQQSSETPTTTGCSGGETNCYKKSWRDHRGYRIERGCGCPSVKKGIEINCCTTDRCNN.

The signal sequence occupies residues 1 to 21; it reads MKTLLLTLLVVTIVCLDLGYT. Intrachain disulfides connect Cys24-Cys45, Cys38-Cys62, Cys64-Cys75, and Cys76-Cys81.

The protein belongs to the three-finger toxin family. Short-chain subfamily. Type I alpha-neurotoxin sub-subfamily. Expressed by the venom gland.

It is found in the secreted. Functionally, binds to muscle nicotinic acetylcholine receptor (nAChR) and inhibit acetylcholine from binding to the receptor, thereby impairing neuromuscular transmission. The polypeptide is Alpha-neurotoxin NTX-1 (Naja sputatrix (Malayan spitting cobra)).